Here is a 297-residue protein sequence, read N- to C-terminus: Aspartate carbamoyltransferase catalytic subunit (297 aa).

R52 and T53 together coordinate carbamoyl phosphate. K80 is an L-aspartate binding site. Residues R102, H130, and Q133 each coordinate carbamoyl phosphate. 2 residues coordinate L-aspartate: R167 and R217. Carbamoyl phosphate-binding residues include G256 and P257.

This sequence belongs to the aspartate/ornithine carbamoyltransferase superfamily. ATCase family. In terms of assembly, heterododecamer (2C3:3R2) of six catalytic PyrB chains organized as two trimers (C3), and six regulatory PyrI chains organized as three dimers (R2).

It carries out the reaction carbamoyl phosphate + L-aspartate = N-carbamoyl-L-aspartate + phosphate + H(+). It participates in pyrimidine metabolism; UMP biosynthesis via de novo pathway; (S)-dihydroorotate from bicarbonate: step 2/3. Catalyzes the condensation of carbamoyl phosphate and aspartate to form carbamoyl aspartate and inorganic phosphate, the committed step in the de novo pyrimidine nucleotide biosynthesis pathway. The chain is Aspartate carbamoyltransferase catalytic subunit from Helicobacter hepaticus (strain ATCC 51449 / 3B1).